We begin with the raw amino-acid sequence, 125 residues long: Large ribosomal subunit protein bL12 (125 aa).

The disordered stretch occupies residues 95–125; it reads APKPIKEGVDKKTAEEAKKKLEEAGAKAELK.

It belongs to the bacterial ribosomal protein bL12 family. As to quaternary structure, homodimer. Part of the ribosomal stalk of the 50S ribosomal subunit. Forms a multimeric L10(L12)X complex, where L10 forms an elongated spine to which 2 to 4 L12 dimers bind in a sequential fashion. Binds GTP-bound translation factors.

Its function is as follows. Forms part of the ribosomal stalk which helps the ribosome interact with GTP-bound translation factors. Is thus essential for accurate translation. The polypeptide is Large ribosomal subunit protein bL12 (Polynucleobacter necessarius subsp. necessarius (strain STIR1)).